The following is a 532-amino-acid chain: MEKSGETNGYLDGTQAEPAAGPRTPETAMGKSQRCASFFRRHALVLLTVSGVLVGAGMGAALRGLQLTRTQITYLAFPGEMLLRMLRMIILPLVVCSLVSGAASLDASSLGRLGGIAVAYFGLTTLSASALAVALAFIIKPGAGAQTLQSSSLGLENSGPPPVSKETVDSFLDLLRNLFPSNLVVAAFTTSATDYTVVTHNTSSGNVTKEKIPVVTDVEGMNILGLVLFALVLGVALKKLGPEGEDLIRFFNSFNEATMVLVSWIMWYVPIGIMFLIGSKIVEMKDIVMLVTSLGKYIFASMLGHVIHGGIVLPLVYFAFTRKNPFTFLLGLLTPFATAFATCSSSATLPSMMKCIEENNGVDKRISRFILPIGATVNMDGAAIFQCVAAVFIAQLNNVDLNAGQIFTILVTATASSVGAAGVPAGGVLTIAIILEAIGLPTHDLSLILAVDWIVDRTTTVVNVEGDALGAGILNHLNQKVVKKGEQELQEVKVEAIPNSKSEEETSPLVTHQNPAGPVAIAPELESKESVL.

N-acetylmethionine is present on methionine 1. The segment at 1–29 (MEKSGETNGYLDGTQAEPAAGPRTPETAM) is disordered. At 1 to 41 (MEKSGETNGYLDGTQAEPAAGPRTPETAMGKSQRCASFFRR) the chain is on the cytoplasmic side. A run of 3 helical transmembrane segments spans residues 42 to 62 (HALV…GAAL), 88 to 108 (MIIL…LDAS), and 119 to 139 (AYFG…AFII). The Extracellular portion of the chain corresponds to 140–216 (KPGAGAQTLQ…VTKEKIPVVT (77 aa)). N-linked (GlcNAc...) asparagine glycosylation is found at asparagine 201 and asparagine 206. 6 helical membrane passes run 217 to 237 (DVEG…GVAL), 257 to 277 (ATMV…MFLI), 298 to 318 (IFAS…LVYF), 328 to 348 (FLLG…SSAT), 373 to 393 (IGAT…AVFI), and 418 to 438 (VGAA…LEAI). Residues 495-532 (EAIPNSKSEEETSPLVTHQNPAGPVAIAPELESKESVL) are disordered. Residues serine 507, serine 527, and serine 530 each carry the phosphoserine modification.

This sequence belongs to the dicarboxylate/amino acid:cation symporter (DAACS) (TC 2.A.23) family. SLC1A4 subfamily.

It localises to the membrane. Its subcellular location is the melanosome. It catalyses the reaction L-threonine(in) + Na(+)(in) = L-threonine(out) + Na(+)(out). The catalysed reaction is L-serine(in) + Na(+)(in) = L-serine(out) + Na(+)(out). It carries out the reaction L-cysteine(in) + Na(+)(in) = L-cysteine(out) + Na(+)(out). The enzyme catalyses L-alanine(in) + Na(+)(in) = L-alanine(out) + Na(+)(out). It catalyses the reaction L-proline(in) + Na(+)(in) = L-proline(out) + Na(+)(out). The catalysed reaction is 4-hydroxy-L-proline(in) + Na(+)(in) = 4-hydroxy-L-proline(out) + Na(+)(out). Its function is as follows. Sodium-dependent neutral amino-acid transporter that mediates transport of alanine, serine, cysteine, proline, hydroxyproline and threonine. The sequence is that of Neutral amino acid transporter A (Slc1a4) from Mus musculus (Mouse).